The primary structure comprises 104 residues: Large ribosomal subunit protein bL21 (104 aa).

It belongs to the bacterial ribosomal protein bL21 family. As to quaternary structure, part of the 50S ribosomal subunit. Contacts protein L20.

This protein binds to 23S rRNA in the presence of protein L20. The chain is Large ribosomal subunit protein bL21 from Rhodopirellula baltica (strain DSM 10527 / NCIMB 13988 / SH1).